We begin with the raw amino-acid sequence, 1163 residues long: Zinc finger protein 516 (1163 aa).

A compositionally biased stretch (basic and acidic residues) spans 1–13; sequence MDRNREAEMELRR. The interval 1–26 is disordered; that stretch reads MDRNREAEMELRRGPSPTRAGRGHEV. The tract at residues 1–431 is mediates promoter DNA-binding and activation of transcription; that stretch reads MDRNREAEME…ATRGKVAEPA (431 aa). 7 C2H2-type zinc fingers span residues 34–56, 62–84, 174–197, 200–223, 248–270, 276–298, and 335–357; these read HTCC…MRKH, YKCP…IRSH, VQCS…HQAH, FKCR…ERDH, FPCE…MKKH, HGCH…MKAH, and EVCA…NAIH. A compositionally biased stretch (basic and acidic residues) spans 460–469; sequence SQEKRKREQD. Disordered regions lie at residues 460–512, 533–667, and 679–730; these read SQEK…TGQG, HSRV…QEQH, and HPKQ…APDL. A compositionally biased stretch (low complexity) spans 496–507; the sequence is RSAARPNRRAAA. A C2H2-type 8 zinc finger spans residues 515 to 537; that stretch reads SECFECGKIFRTYHQMVLHSRVH. The span at 542–552 shows a compositional bias: basic and acidic residues; the sequence is RERDSDGDRAA. Polar residues predominate over residues 561–572; that stretch reads EGDSASQPSSPG. Residues 588-598 are compositionally biased toward acidic residues; the sequence is EAAEDSGEEGA. The span at 615 to 625 shows a compositional bias: polar residues; the sequence is EVTSTELSSGD. Residues 626–641 show a composition bias toward basic and acidic residues; sequence QSHKMGDNASERDTGE. K643 is covalently cross-linked (Glycyl lysine isopeptide (Lys-Gly) (interchain with G-Cter in SUMO2)). The span at 656-667 shows a compositional bias: basic and acidic residues; sequence SSRETSRRQEQH. Residue K681 forms a Glycyl lysine isopeptide (Lys-Gly) (interchain with G-Cter in SUMO2) linkage. A compositionally biased stretch (basic and acidic residues) spans 706 to 720; sequence PAEKLSDLHNKEHSG. The segment at 760–783 adopts a C2H2-type 9; atypical zinc-finger fold; it reads HPCPYCSHKTYYPEVLWMHKRIWH. The segment at 838 to 1007 is disordered; the sequence is TQVPGGMPGS…PPREPPSKAA (170 aa). Positions 840-857 are enriched in low complexity; it reads VPGGMPGSKSGSSPLGVV. Residues K1043 and K1062 each participate in a glycyl lysine isopeptide (Lys-Gly) (interchain with G-Cter in SUMO2) cross-link. A C2H2-type 10 zinc finger spans residues 1098–1120; sequence FVCIECGKSFHQPGHLRAHMRAH. The tract at residues 1126–1163 is disordered; that stretch reads SDGPRGSEVHTTSADAPKQGRDHSNTGTVQTVPLRKGT.

Belongs to the krueppel C2H2-type zinc-finger protein family. In terms of assembly, interacts with PRDM16; the interaction is direct and may play a role in the transcription of brown adipose tissue-specific genes. Interacts with PWWP2B. Interacts with HDAC1; this interaction is enhanced in the presence of PWWP2B.

Its subcellular location is the nucleus. In terms of biological role, transcriptional regulator that binds to the promoter and activates the transcription of genes promoting brown adipose tissue (BAT) differentiation. Among brown adipose tissue-specific genes, binds the proximal region of the promoter of the UCP1 gene to activate its transcription and thereby regulate thermogenesis. May also play a role in the cellular response to replication stress. The protein is Zinc finger protein 516 of Homo sapiens (Human).